Reading from the N-terminus, the 271-residue chain is Tryptophan synthase alpha chain (271 aa).

Catalysis depends on proton acceptor residues glutamate 47 and aspartate 58.

It belongs to the TrpA family. In terms of assembly, tetramer of two alpha and two beta chains.

The enzyme catalyses (1S,2R)-1-C-(indol-3-yl)glycerol 3-phosphate + L-serine = D-glyceraldehyde 3-phosphate + L-tryptophan + H2O. It functions in the pathway amino-acid biosynthesis; L-tryptophan biosynthesis; L-tryptophan from chorismate: step 5/5. Functionally, the alpha subunit is responsible for the aldol cleavage of indoleglycerol phosphate to indole and glyceraldehyde 3-phosphate. The chain is Tryptophan synthase alpha chain from Thermus thermophilus (strain ATCC BAA-163 / DSM 7039 / HB27).